The chain runs to 427 residues: Peptidase B (427 aa).

Residues Lys195 and Asp200 each contribute to the Mn(2+) site. Lys207 is an active-site residue. Mn(2+)-binding residues include Asp218, Asp277, and Glu279. Arg281 is a catalytic residue.

Belongs to the peptidase M17 family. In terms of assembly, homohexamer. Mn(2+) serves as cofactor.

It localises to the cytoplasm. It carries out the reaction Release of an N-terminal amino acid, Xaa, from a peptide or arylamide. Xaa is preferably Glu or Asp but may be other amino acids, including Leu, Met, His, Cys and Gln.. Its function is as follows. Probably plays an important role in intracellular peptide degradation. The chain is Peptidase B from Salmonella arizonae (strain ATCC BAA-731 / CDC346-86 / RSK2980).